The sequence spans 938 residues: Kinesin-like protein KIN-7B (938 aa).

In terms of domain architecture, Kinesin motor spans 29-348; the sequence is KILVTVRMRP…LSFAMSAKEV (320 aa). Residue 113–120 coordinates ATP; that stretch reads GQTSSGKT. Residues 357–431 adopt a coiled-coil conformation; that stretch reads VVSEKKLLKH…DLERKAKERK (75 aa). The tract at residues 450 to 481 is disordered; sequence TKEESIPSKSVPSSRRTARDRRKDNVRQSLTS. Residues 555–590 are a coiled coil; that stretch reads KANLKEEINRLNSQEIAALEKKLECVQNTIDMLVSS. The interval 628-678 is disordered; the sequence is CSPLSGTENKDPESNVVSANSAPVSFGATPPKRDDNRCRTQSREGTPVSRQ. Low complexity predominate over residues 641-652; that stretch reads SNVVSANSAPVS. The span at 658–669 shows a compositional bias: basic and acidic residues; the sequence is PKRDDNRCRTQS.

It belongs to the TRAFAC class myosin-kinesin ATPase superfamily. Kinesin family. KIN-7 subfamily. Interacts with ANP3. Interacts with TIO/FU. Expressed in roots, stems, flowers, pollen mother cells and embryos.

It is found in the cytoplasm. It localises to the cytoskeleton. The protein resides in the phragmoplast. Its function is as follows. Probable plus end-directed motor protein that functions in the NACK-PQR (ANP3-MKK6-MPK4) MAP kinase signaling pathway, which is essential for somatic cell cytokinesis, especially for the cell-plate formation and its expansion. May regulate the activity and the localization of ANP3, probably by association through the non-catalytic region of the kinase. Functionally redundant with NACK1 and essential to promote the progression of cytokinesis and for cellularization (formation of the cell plate) during microgametogenesis and megagametogenesis. This chain is Kinesin-like protein KIN-7B, found in Arabidopsis thaliana (Mouse-ear cress).